Here is a 120-residue protein sequence, read N- to C-terminus: Large ribosomal subunit protein uL18 (120 aa).

Residues 1 to 10 (MKLTRRESKE) show a composition bias toward basic and acidic residues. Residues 1–26 (MKLTRRESKERRHRRVRGKVQGSPER) form a disordered region.

It belongs to the universal ribosomal protein uL18 family. Part of the 50S ribosomal subunit; part of the 5S rRNA/L5/L18/L25 subcomplex. Contacts the 5S and 23S rRNAs.

This is one of the proteins that bind and probably mediate the attachment of the 5S RNA into the large ribosomal subunit, where it forms part of the central protuberance. In Nostoc sp. (strain PCC 7120 / SAG 25.82 / UTEX 2576), this protein is Large ribosomal subunit protein uL18.